A 389-amino-acid chain; its full sequence is MTTISRNTGTEISIMIKEKRLRLNMTQKELADAVGMSKNGDRTIRRWENGETCPSQLEISAILRFPEIAPFENRKTAKYKMIDLFAGIGGTRLGFHQTEKVKSVFSSEIDKFAIKTYKANFGDEPHGDITKIDEKDIPDHDILVGGFPCQAFSQAGKKLGFDDTRGTLFFEIARIIKEKRPKAFLLENVKNLKTHDKGRTFKTILNTLEELDYEVHTALFKARDFGLPQNRERIYIVGFDRKSISNYSDFQMPTPLQEKTRVGNILESVVDDKYTISDKLWDGHQRRKTENKKNGKGFGYTLFNQDSEYTNTLSARYYKDGSEILIEQKNKNPRKITPREAARLQGFPENFIIPVSDTQAYKEFGNSVAVPTIHAIAEKMLEVLEKSKK.

One can recognise an HTH cro/C1-type domain in the interval 16 to 71 (IKEKRLRLNMTQKELADAVGMSKNGDRTIRRWENGETCPSQLEISAILRFPEIAPF). An SAM-dependent MTase C5-type domain is found at 79 to 387 (YKMIDLFAGI…EKMLEVLEKS (309 aa)). The active site involves Cys-149.

It belongs to the class I-like SAM-binding methyltransferase superfamily. C5-methyltransferase family.

It catalyses the reaction a 2'-deoxycytidine in DNA + S-adenosyl-L-methionine = a 5-methyl-2'-deoxycytidine in DNA + S-adenosyl-L-homocysteine + H(+). In terms of biological role, a methylase, recognizes the double-stranded sequence 5'-CCNGG-3', methylates C-2 on both strands, and protects the DNA from cleavage by the ScrFI endonuclease. This is Type II methyltransferase M1.ScrFI (scrFIAM) from Lactococcus lactis subsp. cremoris (Streptococcus cremoris).